The following is a 359-amino-acid chain: Type-1 angiotensin II receptor A (359 aa).

The Extracellular segment spans residues 1–25 (MALNSSTEDGIKRIQDDCPRAGRHS). N-linked (GlcNAc...) asparagine glycosylation is present at Asn4. Angiotensin II contacts are provided by Gln15 and Asp17. Intrachain disulfides connect Cys18–Cys274 and Cys101–Cys180. The helical transmembrane segment at 26-55 (YIFVMIPTLYSIIFVVGIFGNSLVVIVIYF) threads the bilayer. Topologically, residues 56-61 (YMKLKT) are cytoplasmic. The helical transmembrane segment at 62 to 89 (VASVFLLNLALADLCFLLTLPLWAVYTA) threads the bilayer. Residues 90-98 (MEYRWPFGN) are Extracellular-facing. A helical transmembrane segment spans residues 99 to 125 (HLCKIASASVSFNLYASVFLLTCLSID). Residues 126–141 (RYLAIVHPMKSRLRRT) lie on the Cytoplasmic side of the membrane. A helical membrane pass occupies residues 142-165 (MLVAKVTCIIIWLMAGLASLPAVI). Over 166-190 (HRNVYFIENTNITVCAFHYESRNST) the chain is Extracellular. Position 167 (Arg167) interacts with angiotensin II. N-linked (GlcNAc...) asparagine glycosylation is present at Asn176. 3 residues coordinate angiotensin II: Phe182, His183, and Tyr184. Residue Asn188 is glycosylated (N-linked (GlcNAc...) asparagine). The chain crosses the membrane as a helical span at residues 191-216 (LPIGLGLTKNILGFLFPFLIILTSYT). Lys199 contacts angiotensin II. Residues 217-239 (LIWKALKKAYEIQKNKPRNDDIF) lie on the Cytoplasmic side of the membrane. A helical transmembrane segment spans residues 240–268 (RIIMAIVLFFFFSWVPHQIFTFLDVLIQL). At 269–278 (GVIHDCKIAD) the chain is on the extracellular side. Residues 279-304 (IVDTAMPITICIAYFNNCLNPLFYGF) traverse the membrane as a helical segment. Residues 305–359 (LGKKFKKYFLQLLKYIPPKAKSHSSLSTKMSTLSYRPSDNMSSAAKKPASCSEVE) are Cytoplasmic-facing. Polar residues predominate over residues 335-347 (STLSYRPSDNMSS). Residues 335–359 (STLSYRPSDNMSSAAKKPASCSEVE) form a disordered region. A lipid anchor (S-palmitoyl cysteine) is attached at Cys355.

Belongs to the G-protein coupled receptor 1 family. In terms of assembly, interacts with MAS1. Interacts with ARRB1. Interacts with FLNA (via filamin repeat 21); increases PKA-mediated phosphorylation of FLNA. Post-translationally, C-terminal Ser or Thr residues may be phosphorylated.

The protein resides in the cell membrane. Its function is as follows. Receptor for angiotensin II, a vasoconstricting peptide, which acts as a key regulator of blood pressure and sodium retention by the kidney. The activated receptor in turn couples to G-alpha proteins G(q) (GNAQ, GNA11, GNA14 or GNA15) and thus activates phospholipase C and increases the cytosolic Ca(2+) concentrations, which in turn triggers cellular responses such as stimulation of protein kinase C. The protein is Type-1 angiotensin II receptor A (Agtr1a) of Mus musculus (Mouse).